The chain runs to 588 residues: Aspartate--tRNA ligase (588 aa).

Glu-177 provides a ligand contact to L-aspartate. An aspartate region spans residues 201-204 (QLFK). Arg-223 contacts L-aspartate. Residues 223 to 225 (RDE) and Gln-232 contribute to the ATP site. L-aspartate is bound at residue His-451. Residue Glu-485 participates in ATP binding. Position 492 (Arg-492) interacts with L-aspartate. 537 to 540 (GLDR) lines the ATP pocket.

The protein belongs to the class-II aminoacyl-tRNA synthetase family. Type 1 subfamily. Homodimer.

It is found in the cytoplasm. It catalyses the reaction tRNA(Asp) + L-aspartate + ATP = L-aspartyl-tRNA(Asp) + AMP + diphosphate. Functionally, catalyzes the attachment of L-aspartate to tRNA(Asp) in a two-step reaction: L-aspartate is first activated by ATP to form Asp-AMP and then transferred to the acceptor end of tRNA(Asp). The protein is Aspartate--tRNA ligase of Staphylococcus haemolyticus (strain JCSC1435).